The sequence spans 48 residues: Large ribosomal subunit protein bL34 (48 aa).

This sequence belongs to the bacterial ribosomal protein bL34 family.

The chain is Large ribosomal subunit protein bL34 from Gloeothece citriformis (strain PCC 7424) (Cyanothece sp. (strain PCC 7424)).